The primary structure comprises 588 residues: Sulfite reductase [NADPH] hemoprotein beta-component (588 aa).

Positions 442, 448, 487, and 491 each coordinate [4Fe-4S] cluster. Siroheme is bound at residue Cys491.

The protein belongs to the nitrite and sulfite reductase 4Fe-4S domain family. In terms of assembly, alpha(8)-beta(8). The alpha component is a flavoprotein, the beta component is a hemoprotein. Requires siroheme as cofactor. The cofactor is [4Fe-4S] cluster.

It carries out the reaction hydrogen sulfide + 3 NADP(+) + 3 H2O = sulfite + 3 NADPH + 4 H(+). It functions in the pathway sulfur metabolism; hydrogen sulfide biosynthesis; hydrogen sulfide from sulfite (NADPH route): step 1/1. In terms of biological role, component of the sulfite reductase complex that catalyzes the 6-electron reduction of sulfite to sulfide. This is one of several activities required for the biosynthesis of L-cysteine from sulfate. The protein is Sulfite reductase [NADPH] hemoprotein beta-component of Actinobacillus pleuropneumoniae serotype 3 (strain JL03).